We begin with the raw amino-acid sequence, 189 residues long: Lutzicidin (189 aa).

Residues 1–22 (MQGFFWKTLLVVALCGTSSSLA) form the signal peptide. Positions 23-155 (HRPLSYGEAL…DEEKDRPKRV (133 aa)) are excised as a propeptide. Intrachain disulfides connect Cys-79–Cys-90 and Cys-101–Cys-118. The segment covering 125 to 148 (EEEEEDEEEQKAEVEKDEEKEDEE) has biased composition (acidic residues). The tract at residues 125-152 (EEEEEDEEEQKAEVEKDEEKEDEEKDRP) is disordered.

It belongs to the cathelicidin family. As to expression, expressed by the venom gland.

It is found in the secreted. The protein resides in the target cell membrane. Its function is as follows. Potent antimicrobial peptide against Gram-negative and Gram-positive bacteria. Adopts an amphipathic alpha helical conformation, that may allow to partition into the target membrane. Low hemolytic activities have been observed on mammalian cells. This Bothrops lutzi (Sertao lancehead) protein is Lutzicidin.